The chain runs to 330 residues: Ribosomal RNA small subunit methyltransferase C (330 aa).

Belongs to the methyltransferase superfamily. RsmC family. Monomer.

The protein localises to the cytoplasm. The catalysed reaction is guanosine(1207) in 16S rRNA + S-adenosyl-L-methionine = N(2)-methylguanosine(1207) in 16S rRNA + S-adenosyl-L-homocysteine + H(+). Specifically methylates the guanine in position 1207 of 16S rRNA in the 30S particle. This Haemophilus influenzae (strain PittGG) protein is Ribosomal RNA small subunit methyltransferase C.